Consider the following 486-residue polypeptide: Aspartyl/glutamyl-tRNA(Asn/Gln) amidotransferase subunit B (486 aa).

This sequence belongs to the GatB/GatE family. GatB subfamily. As to quaternary structure, heterotrimer of A, B and C subunits.

It catalyses the reaction L-glutamyl-tRNA(Gln) + L-glutamine + ATP + H2O = L-glutaminyl-tRNA(Gln) + L-glutamate + ADP + phosphate + H(+). The catalysed reaction is L-aspartyl-tRNA(Asn) + L-glutamine + ATP + H2O = L-asparaginyl-tRNA(Asn) + L-glutamate + ADP + phosphate + 2 H(+). Functionally, allows the formation of correctly charged Asn-tRNA(Asn) or Gln-tRNA(Gln) through the transamidation of misacylated Asp-tRNA(Asn) or Glu-tRNA(Gln) in organisms which lack either or both of asparaginyl-tRNA or glutaminyl-tRNA synthetases. The reaction takes place in the presence of glutamine and ATP through an activated phospho-Asp-tRNA(Asn) or phospho-Glu-tRNA(Gln). The chain is Aspartyl/glutamyl-tRNA(Asn/Gln) amidotransferase subunit B from Orientia tsutsugamushi (strain Boryong) (Rickettsia tsutsugamushi).